The chain runs to 1171 residues: ATP-dependent helicase/deoxyribonuclease subunit B (1171 aa).

Residues Met-1–Ala-390 enclose the UvrD-like helicase ATP-binding domain. Gly-8–Ser-15 lines the ATP pocket. The UvrD-like helicase C-terminal domain maps to Met-281–Asp-587. Residues Cys-805, Cys-1129, Cys-1132, and Cys-1138 each contribute to the [4Fe-4S] cluster site.

Belongs to the helicase family. AddB/RexB type 1 subfamily. In terms of assembly, heterodimer of AddA and AddB. It depends on Mg(2+) as a cofactor. The cofactor is [4Fe-4S] cluster.

Its function is as follows. The heterodimer acts as both an ATP-dependent DNA helicase and an ATP-dependent, dual-direction single-stranded exonuclease. Recognizes the chi site generating a DNA molecule suitable for the initiation of homologous recombination. The AddB subunit has 5' -&gt; 3' nuclease activity but not helicase activity. This chain is ATP-dependent helicase/deoxyribonuclease subunit B, found in Bacillus cereus (strain ZK / E33L).